A 340-amino-acid chain; its full sequence is UDP-3-O-(3-hydroxymyristoyl)glucosamine N-acyltransferase (340 aa).

The Proton acceptor role is filled by histidine 239.

This sequence belongs to the transferase hexapeptide repeat family. LpxD subfamily. Homotrimer.

The catalysed reaction is a UDP-3-O-[(3R)-3-hydroxyacyl]-alpha-D-glucosamine + a (3R)-hydroxyacyl-[ACP] = a UDP-2-N,3-O-bis[(3R)-3-hydroxyacyl]-alpha-D-glucosamine + holo-[ACP] + H(+). The enzyme catalyses UDP-3-O-[(3R)-3-hydroxytetradecanoyl]-alpha-D-glucosamine + (3R)-hydroxytetradecanoyl-[ACP] = UDP-2-N,3-O-bis[(3R)-3-hydroxytetradecanoyl]-alpha-D-glucosamine + holo-[ACP] + H(+). It participates in glycolipid biosynthesis; lipid IV(A) biosynthesis; lipid IV(A) from (3R)-3-hydroxytetradecanoyl-[acyl-carrier-protein] and UDP-N-acetyl-alpha-D-glucosamine: step 3/6. Catalyzes the N-acylation of UDP-3-O-(hydroxytetradecanoyl)glucosamine using 3-hydroxytetradecanoyl-ACP as the acyl donor. Is involved in the biosynthesis of lipid A, a phosphorylated glycolipid that anchors the lipopolysaccharide to the outer membrane of the cell. The sequence is that of UDP-3-O-(3-hydroxymyristoyl)glucosamine N-acyltransferase from Pectobacterium atrosepticum (strain SCRI 1043 / ATCC BAA-672) (Erwinia carotovora subsp. atroseptica).